A 102-amino-acid polypeptide reads, in one-letter code: Small ribosomal subunit protein uS10 (102 aa).

It belongs to the universal ribosomal protein uS10 family. In terms of assembly, part of the 30S ribosomal subunit.

Functionally, involved in the binding of tRNA to the ribosomes. The chain is Small ribosomal subunit protein uS10 from Clostridium acetobutylicum (strain ATCC 824 / DSM 792 / JCM 1419 / IAM 19013 / LMG 5710 / NBRC 13948 / NRRL B-527 / VKM B-1787 / 2291 / W).